Consider the following 388-residue polypeptide: Lipid-A-disaccharide synthase (388 aa).

Belongs to the LpxB family.

It carries out the reaction a lipid X + a UDP-2-N,3-O-bis[(3R)-3-hydroxyacyl]-alpha-D-glucosamine = a lipid A disaccharide + UDP + H(+). It participates in bacterial outer membrane biogenesis; LPS lipid A biosynthesis. Functionally, condensation of UDP-2,3-diacylglucosamine and 2,3-diacylglucosamine-1-phosphate to form lipid A disaccharide, a precursor of lipid A, a phosphorylated glycolipid that anchors the lipopolysaccharide to the outer membrane of the cell. This chain is Lipid-A-disaccharide synthase, found in Burkholderia mallei (strain NCTC 10247).